Here is a 192-residue protein sequence, read N- to C-terminus: Adenylate kinase (192 aa).

12-17 (GSGKTT) contributes to the ATP binding site. An NMP region spans residues 34-63 (STGDLLRAEVASGSELGKTIDSFISKGNLV). AMP-binding positions include Thr-35, Arg-40, 61 to 63 (NLV), 88 to 91 (GYPR), and Gln-95. The tract at residues 130–136 (GRNRGTD) is LID. An ATP-binding site is contributed by Arg-131. 2 residues coordinate AMP: Arg-133 and Arg-145. Arg-173 contacts ATP.

It belongs to the adenylate kinase family. As to quaternary structure, monomer.

It localises to the cytoplasm. The enzyme catalyses AMP + ATP = 2 ADP. It functions in the pathway purine metabolism; AMP biosynthesis via salvage pathway; AMP from ADP: step 1/1. Catalyzes the reversible transfer of the terminal phosphate group between ATP and AMP. Plays an important role in cellular energy homeostasis and in adenine nucleotide metabolism. The protein is Adenylate kinase of Campylobacter jejuni (strain RM1221).